The chain runs to 24 residues: Coenzyme PQQ synthesis protein A (24 aa).

The pyrroloquinoline quinone (Glu-Tyr) cross-link spans E16–Y20.

The protein belongs to the PqqA family.

Its pathway is cofactor biosynthesis; pyrroloquinoline quinone biosynthesis. Its function is as follows. Required for coenzyme pyrroloquinoline quinone (PQQ) biosynthesis. PQQ is probably formed by cross-linking a specific glutamate to a specific tyrosine residue and excising these residues from the peptide. The polypeptide is Coenzyme PQQ synthesis protein A (Methylococcus capsulatus (strain ATCC 33009 / NCIMB 11132 / Bath)).